A 92-amino-acid chain; its full sequence is Acylphosphatase (92 aa).

One can recognise an Acylphosphatase-like domain in the interval R5–F92. Residues R20 and N38 contribute to the active site.

Belongs to the acylphosphatase family.

The catalysed reaction is an acyl phosphate + H2O = a carboxylate + phosphate + H(+). The sequence is that of Acylphosphatase (acyP) from Syntrophotalea carbinolica (strain DSM 2380 / NBRC 103641 / GraBd1) (Pelobacter carbinolicus).